Consider the following 272-residue polypeptide: HMP-PP phosphatase (272 aa).

Asp-8 functions as the Nucleophile in the catalytic mechanism. Residues Asp-8, Asp-10, and Asp-212 each contribute to the Mg(2+) site.

Belongs to the HAD-like hydrolase superfamily. Cof family. Mg(2+) is required as a cofactor.

The catalysed reaction is 4-amino-2-methyl-5-(diphosphooxymethyl)pyrimidine + H2O = 4-amino-2-methyl-5-(phosphooxymethyl)pyrimidine + phosphate + H(+). In terms of biological role, catalyzes the hydrolysis of 4-amino-2-methyl-5-hydroxymethylpyrimidine pyrophosphate (HMP-PP) to 4-amino-2-methyl-5-hydroxymethylpyrimidine phosphate (HMP-P). The protein is HMP-PP phosphatase of Escherichia coli (strain 55989 / EAEC).